A 315-amino-acid polypeptide reads, in one-letter code: Methionyl-tRNA formyltransferase (315 aa).

113 to 116 (SLLP) serves as a coordination point for (6S)-5,6,7,8-tetrahydrofolate.

It belongs to the Fmt family.

The enzyme catalyses L-methionyl-tRNA(fMet) + (6R)-10-formyltetrahydrofolate = N-formyl-L-methionyl-tRNA(fMet) + (6S)-5,6,7,8-tetrahydrofolate + H(+). Functionally, attaches a formyl group to the free amino group of methionyl-tRNA(fMet). The formyl group appears to play a dual role in the initiator identity of N-formylmethionyl-tRNA by promoting its recognition by IF2 and preventing the misappropriation of this tRNA by the elongation apparatus. The protein is Methionyl-tRNA formyltransferase of Salmonella enteritidis PT4 (strain P125109).